Here is a 206-residue protein sequence, read N- to C-terminus: Large ribosomal subunit protein uL4 (206 aa).

Residues 63–96 (MYKQKGTGRARHHSARAPQFRGGGKAHGPVVRSH) form a disordered region. Over residues 64–77 (YKQKGTGRARHHSA) the composition is skewed to basic residues.

The protein belongs to the universal ribosomal protein uL4 family. Part of the 50S ribosomal subunit.

In terms of biological role, one of the primary rRNA binding proteins, this protein initially binds near the 5'-end of the 23S rRNA. It is important during the early stages of 50S assembly. It makes multiple contacts with different domains of the 23S rRNA in the assembled 50S subunit and ribosome. Forms part of the polypeptide exit tunnel. The chain is Large ribosomal subunit protein uL4 from Allorhizobium ampelinum (strain ATCC BAA-846 / DSM 112012 / S4) (Agrobacterium vitis (strain S4)).